A 108-amino-acid chain; its full sequence is Tubulin-specific chaperone A (108 aa).

A2 carries the post-translational modification N-acetylalanine.

It belongs to the TBCA family. Supercomplex made of cofactors A to E. Cofactors A and D function by capturing and stabilizing tubulin in a quasi-native conformation. Cofactor E binds to the cofactor D-tubulin complex; interaction with cofactor C then causes the release of tubulin polypeptides that are committed to the native state.

It localises to the cytoplasm. The protein localises to the cytoskeleton. In terms of biological role, tubulin-folding protein; involved in the early step of the tubulin folding pathway. This chain is Tubulin-specific chaperone A (TBCA), found in Gallus gallus (Chicken).